A 92-amino-acid chain; its full sequence is Large ribosomal subunit protein bL25 (92 aa).

The protein belongs to the bacterial ribosomal protein bL25 family. As to quaternary structure, part of the 50S ribosomal subunit; part of the 5S rRNA/L5/L18/L25 subcomplex. Contacts the 5S rRNA. Binds to the 5S rRNA independently of L5 and L18.

Functionally, this is one of the proteins that binds to the 5S RNA in the ribosome where it forms part of the central protuberance. The sequence is that of Large ribosomal subunit protein bL25 from Aliivibrio salmonicida (strain LFI1238) (Vibrio salmonicida (strain LFI1238)).